A 99-amino-acid polypeptide reads, in one-letter code: Small ribosomal subunit protein bS20 (99 aa).

The protein belongs to the bacterial ribosomal protein bS20 family.

Binds directly to 16S ribosomal RNA. This chain is Small ribosomal subunit protein bS20, found in Prochlorococcus marinus (strain SARG / CCMP1375 / SS120).